The primary structure comprises 118 residues: Protein TusC (118 aa).

The protein belongs to the DsrF/TusC family. In terms of assembly, heterohexamer, formed by a dimer of trimers. The hexameric TusBCD complex contains 2 copies each of TusB, TusC and TusD. The TusBCD complex interacts with TusE.

It localises to the cytoplasm. Functionally, part of a sulfur-relay system required for 2-thiolation of 5-methylaminomethyl-2-thiouridine (mnm(5)s(2)U) at tRNA wobble positions. This chain is Protein TusC, found in Salmonella arizonae (strain ATCC BAA-731 / CDC346-86 / RSK2980).